The primary structure comprises 1192 residues: Outer capsid protein VP2 (1192 aa).

A disordered region spans residues 1112–1192 (IDQFMLDDMP…QSVAKPGIVR (81 aa)). Low complexity predominate over residues 1140-1150 (PSAAANTEAST). Over residues 1159–1183 (NVVSPTVPGQPSQTPVNPNQSTELQ) the composition is skewed to polar residues.

The protein localises to the virion. It carries out the reaction a 5'-end diphospho-ribonucleoside in mRNA + GTP + H(+) = a 5'-end (5'-triphosphoguanosine)-ribonucleoside in mRNA + diphosphate. The catalysed reaction is a 5'-end (5'-triphosphoguanosine)-ribonucleoside in mRNA + S-adenosyl-L-methionine = a 5'-end (N(7)-methyl 5'-triphosphoguanosine)-ribonucleoside in mRNA + S-adenosyl-L-homocysteine. Outer capsid protein involved in mRNA capping. Catalyzes the last 3 enzymatic activities for formation of the 5' cap structure on the viral plus-strand transcripts, namely the RNA guanylyltransferase, RNA-7N- and RNA-2'O-methyltransferase activities. The sequence is that of Outer capsid protein VP2 (S2) from Rice ragged stunt virus (isolate Thailand) (RRSV).